Here is a 480-residue protein sequence, read N- to C-terminus: Gamma-aminobutyric acid receptor subunit rho-1 (480 aa).

The first 21 residues, 1 to 21 (MLAVRNMKFGIFLLWWGWVLA), serve as a signal peptide directing secretion. The Extracellular segment spans residues 22–281 (AESTVHWPGR…LYINFTLRRH (260 aa)). The interval 31-67 (REVHEPSKKGSRPQRQRRGAHDDAHKQGSPILKRSSD) is disordered. The span at 39-48 (KGSRPQRQRR) shows a compositional bias: basic residues. 4-aminobutanoate is bound at residue arginine 126. Asparagine 141 carries N-linked (GlcNAc...) asparagine glycosylation. Position 190 (serine 190) interacts with 4-aminobutanoate. Cysteine 199 and cysteine 213 are disulfide-bonded. Glutamate 218 contributes to the 4-aminobutanoate binding site. N-linked (GlcNAc...) asparagine glycans are attached at residues asparagine 235 and asparagine 275. The helical transmembrane segment at 282–302 (IFFFLLQTYFPATLMVMLSWV) threads the bilayer. The Cytoplasmic portion of the chain corresponds to 303-314 (SFWIDRRAVPAR). Residues 315-335 (VPLGITTVLTMSTIITGVNAS) traverse the membrane as a helical segment. The Extracellular portion of the chain corresponds to 336-346 (MPRVSYIKAVD). The helical transmembrane segment at 347–367 (IYLWVSFVFVFLSVLEYAAVN) threads the bilayer. The Cytoplasmic segment spans residues 368-458 (YLTTVQERKE…MRINTHAIDK (91 aa)). The helical transmembrane segment at 459–479 (YSRIIFPAAYILFNLIYWSIF) threads the bilayer. A topological domain (extracellular) is located at residue serine 480.

This sequence belongs to the ligand-gated ion channel (TC 1.A.9) family. Gamma-aminobutyric acid receptor (TC 1.A.9.5) subfamily. GABRR1 sub-subfamily. In terms of assembly, three rho subunits (rho-1/GBRR1, rho-2/GBRR2 and rho-3/GBRR3) coassemble either to form functional homopentamers or heteropentamers. Rho-1/GBRR1 subunits can also associate with alpha-1/GBRA1 subunits to form a functional GABAAR. Interacts with SQSTM1.

Its subcellular location is the postsynaptic cell membrane. The protein resides in the cell membrane. The enzyme catalyses chloride(in) = chloride(out). Its activity is regulated as follows. Inhibited by TPMPA, a rho-specific antagonist. Inhibited by picrotoxin, when forming a homopentamer. In contrast with other GABAARs, rho-1 GABAAR is not inhibited by bicuculline, when forming a homopentamer. Down-regulated by external protons when forming a homopentamer. Functionally, rho subunit of the pentameric ligand-gated chloride channels responsible for mediating the effects of gamma-aminobutyric acid (GABA), the major inhibitory neurotransmitter in the brain. Rho-containing GABA-gated chloride channels are a subclass of GABA(A) receptors (GABAARs) entirely composed of rho subunits, where GABA molecules bind at the rho intersubunit interfaces. When activated by GABA, rho-GABAARs selectively allow the flow of chloride anions across the cell membrane down their electrochemical gradient. Rho-1 subunits are primarily expressed in retina where rho-1-containing GABAARs may play a role in retinal neurotransmission. Rho-1 GABAARs are also involved in neuronal tonic (extrasynaptic) and phasic (synaptic) transmission in the Purkinje neurons of the cerebellum. Rho-1 GABAARs may also contribute to the regulation of glial development in the cerebellum by controlling extrasynaptic transmission. The protein is Gamma-aminobutyric acid receptor subunit rho-1 of Rattus norvegicus (Rat).